Here is an 862-residue protein sequence, read N- to C-terminus: Protein argonaute-2 (862 aa).

The PAZ domain occupies 232–351 (PVIEFMCEVL…LPLEVCNIVA (120 aa)). Interaction with guide RNA stretches follow at residues 314 to 319 (YFKDRH) and 527 to 569 (GKTP…LCLK). The Piwi domain occupies 520-821 (LVVVILPGKT…VAFRARYHLV (302 aa)). The segment at 590–593 (FQQP) is interaction with GW182 family members. Residue D600 coordinates a divalent metal cation. Residues 653-663 (LIQFYKSTRFK) are interaction with GW182 family members. D672 serves as a coordination point for a divalent metal cation. Interaction with guide RNA stretches follow at residues 712-713 (KR), 756-764 (HAGIQGTSR), and 793-815 (YVRCTRSVSIPAPAYYAHLVAFR). Residue H810 participates in a divalent metal cation binding. The segment at 825 to 847 (HDSAEGSHTSGQSNGRDQQALAK) is disordered. Residues 830-841 (GSHTSGQSNGRD) show a composition bias toward polar residues.

Belongs to the argonaute family. Ago subfamily. In terms of assembly, component of the RISC loading complex (RLC), or micro-RNA (miRNA) loading complex (miRLC), which is composed of dicer1, ago2 and tarbp2. Note that the trimeric RLC/miRLC is also referred to as RISC. Mg(2+) is required as a cofactor. Requires Mn(2+) as cofactor.

It is found in the cytoplasm. It localises to the P-body. It catalyses the reaction Endonucleolytic cleavage to 5'-phosphomonoester.. Required for RNA-mediated gene silencing (RNAi) by the RNA-induced silencing complex (RISC). The 'minimal RISC' appears to include ago2 bound to a short guide RNA such as a microRNA (miRNA) or short interfering RNA (siRNA). These guide RNAs direct RISC to complementary mRNAs that are targets for RISC-mediated gene silencing. The precise mechanism of gene silencing depends on the degree of complementarity between the miRNA or siRNA and its target. Binding of RISC to a perfectly complementary mRNA generally results in silencing due to endonucleolytic cleavage of the mRNA specifically by ago2. Binding of RISC to a partially complementary mRNA results in silencing through inhibition of translation, and this is independent of endonuclease activity. The inhibition of translational initiation leads to the accumulation of the affected mRNA in cytoplasmic processing bodies (P-bodies), where mRNA degradation may subsequently occur. This Xenopus laevis (African clawed frog) protein is Protein argonaute-2 (ago2).